We begin with the raw amino-acid sequence, 502 residues long: Probable ADP-dependent glucokinase (502 aa).

A signal peptide spans 1–32; that stretch reads MFSETFVPSIFSYKHRLLHLSVLFFIVPYWYS. The ADPK domain occupies 44 to 497; that stretch reads SVETAMFLSW…LLYSQFYRLN (454 aa). N89 and N190 each carry an N-linked (GlcNAc...) asparagine glycan. Mg(2+) is bound by residues E290, E320, and D481. The Proton acceptor role is filled by D481.

It belongs to the ADP-dependent glucokinase family. As to quaternary structure, monomer. Mg(2+) serves as cofactor.

It localises to the secreted. The catalysed reaction is D-glucose + ADP = D-glucose 6-phosphate + AMP + H(+). The protein operates within carbohydrate degradation; glycolysis. Its function is as follows. Catalyzes the phosphorylation of D-glucose to D-glucose 6-phosphate using ADP as the phosphate donor. GDP and CDP can replace ADP, but with reduced efficiency. This Caenorhabditis elegans protein is Probable ADP-dependent glucokinase.